A 719-amino-acid chain; its full sequence is DNA polymerase epsilon subunit B (719 aa).

Residues 107-147 are disordered; the sequence is SIPPKTKTYNNGGGKTTTIDRFLTKRPSPSDNDEGPLDQSI.

This sequence belongs to the DNA polymerase epsilon subunit B family. Heterotetramer. Consists of four subunits: POL2, DPB2, DPB3 and DPB4.

The protein localises to the nucleus. As accessory component of the DNA polymerase epsilon (DNA polymerase II) participates in chromosomal DNA replication. The sequence is that of DNA polymerase epsilon subunit B (DPB2) from Candida glabrata (strain ATCC 2001 / BCRC 20586 / JCM 3761 / NBRC 0622 / NRRL Y-65 / CBS 138) (Yeast).